The chain runs to 871 residues: Probable receptor-like protein kinase At2g21480 (871 aa).

The signal sequence occupies residues 1–39 (MEIRKKPNIPMCLVLDSSSRPFMTLLFTILLFLTGLASA). At 40–439 (VGAVGGSPTA…GQRASMGKQG (400 aa)) the chain is on the extracellular side. N-linked (GlcNAc...) asparagine glycans are attached at residues Asn169, Asn182, Asn253, Asn316, and Asn381. A helical transmembrane segment spans residues 440 to 460 (MVATAGFVMMFGAFVGLGAMV). Over 461-871 (YKWKKRPQDW…FTQFASLNGR (411 aa)) the chain is Cytoplasmic. The region spanning 525 to 797 (FDASEIIGVG…GDVLWNLEYA (273 aa)) is the Protein kinase domain. Residues 531–539 (IGVGGFGNV) and Lys553 contribute to the ATP site. The Proton acceptor role is filled by Asp649. Positions 808–871 (KAEAEEVETP…FTQFASLNGR (64 aa)) are disordered. A compositionally biased stretch (low complexity) spans 817 to 839 (PKPVAVPAAAPTSPAATTAAASE). A compositionally biased stretch (polar residues) spans 854–871 (DQHSGTTMFTQFASLNGR).

The protein belongs to the protein kinase superfamily. Ser/Thr protein kinase family.

The protein localises to the membrane. This Arabidopsis thaliana (Mouse-ear cress) protein is Probable receptor-like protein kinase At2g21480.